Consider the following 2079-residue polypeptide: von Willebrand factor A domain-containing protein DDB_G0286969 (2079 aa).

Residues 11–147 enclose the VIT domain; that stretch reads EQILPSFISI…ELEIIITYST (137 aa). The tract at residues 178–203 is disordered; sequence NENSTTNTNTQTQPQSVNTTTTTTPS. The span at 180–203 shows a compositional bias: low complexity; it reads NSTTNTNTQTQPQSVNTTTTTTPS. In terms of domain architecture, VWFA spans 354–525; that stretch reads ELIFLVDVSE…KVMRQLKRAL (172 aa). Disordered stretches follow at residues 761-800, 832-866, 956-1139, 1155-1203, and 1239-1294; these read PTTL…LKTP, PFVP…TEVK, AKPV…TKPT, NEPA…VSST, and DSNT…ADAE. Low complexity-rich tracts occupy residues 785–800, 841–866, and 956–973; these read TTQQ…LKTP, PTTT…TEVK, and AKPV…QQTK. The stretch at 923 to 957 forms a coiled coil; the sequence is EMIKIAEAKAAAEQKAAAEQKAIADAKAAAEQAAK. The span at 974–989 shows a compositional bias: basic and acidic residues; sequence PKADKQSKQNAKDNKQ. The segment covering 992 to 1006 has biased composition (low complexity); sequence KPVVVEQKPPVVTET. Residues 1007 to 1021 show a composition bias toward polar residues; sequence KPTVATESATPTKPT. The span at 1023-1061 shows a compositional bias: low complexity; the sequence is AQAAAAAAAAAQQAAQQAAATTPVKQQPTKQTTPNKSTP. Residues 1092 to 1111 are compositionally biased toward basic and acidic residues; that stretch reads KPVETKPVEQTKPVETKPVE. Residues 1176-1198 show a composition bias toward low complexity; it reads NNNNNNNNNNNNNNNNNNNNNNN. The span at 1239–1272 shows a compositional bias: polar residues; it reads DSNTKAPDSLKTTPIFSNGPQGISPSSGNGSNKS. Residues 1280–1292 are compositionally biased toward basic and acidic residues; it reads DRGGRGGRDRNAD. The MIF4G domain occupies 1317–1527; sequence LKKFKFNLNR…LDLIDLRANK (211 aa). The interval 1530–1755 is disordered; the sequence is PKNSTQTKTK…PAPVEPVKPK (226 aa). Composition is skewed to basic and acidic residues over residues 1538 to 1550, 1557 to 1599, and 1621 to 1634; these read TKKD…ERFI, QKRE…RDAP, and NNRD…DRSG. 2 stretches are compositionally biased toward low complexity: residues 1635-1659 and 1688-1699; these read GKQS…LFGS and SSSIPSIPNRSN. The span at 1725-1740 shows a compositional bias: basic and acidic residues; the sequence is SNDRDSRGPSKPDNRK. The MI domain occupies 1760–1882; that stretch reads KIEDDISMTL…PLNYLEEAYA (123 aa).

The protein is von Willebrand factor A domain-containing protein DDB_G0286969 of Dictyostelium discoideum (Social amoeba).